The following is a 219-amino-acid chain: RPA-interacting protein (219 aa).

A Phosphoserine modification is found at Ser-18. The RIP-type zinc-finger motif lies at 137–212; the sequence is CPVCIKYNLR…PSLLMNCLTC (76 aa). The segment at 164-180 is mediates nuclear export; that stretch reads STDLTEQKLRACLEENV.

In terms of assembly, interacts with the RPA1 subunit of RPA complex. In terms of processing, sumoylated; required for localization in the nuclear PML body and transport of RPA complex in PML body. Upon UV irradiation and during S phase, it is desumoylated, releasing RPA complex that is translocated to sites of DNA damage. Sumoylation takes place at different Lys residues.

Its subcellular location is the nucleus. Functionally, mediates the import of RPA complex into the nucleus, possibly via some interaction with importin beta. Sumoylation mediates the localization of RPA complex into the PML body of the nucleus, thereby participating in RPA function in DNA metabolism. The chain is RPA-interacting protein (Rpain) from Mus musculus (Mouse).